We begin with the raw amino-acid sequence, 152 residues long: Transcriptional regulator MraZ (152 aa).

2 consecutive SpoVT-AbrB domains span residues 5-52 (ASAI…PIHE) and 81-124 (AHEC…DEAA).

The protein belongs to the MraZ family. In terms of assembly, forms oligomers.

It is found in the cytoplasm. The protein localises to the nucleoid. The polypeptide is Transcriptional regulator MraZ (Shewanella pealeana (strain ATCC 700345 / ANG-SQ1)).